A 510-amino-acid polypeptide reads, in one-letter code: Histidine ammonia-lyase (510 aa).

Residues 143–145 constitute a cross-link (5-imidazolinone (Ala-Gly)); that stretch reads ASG. Ser-144 carries the post-translational modification 2,3-didehydroalanine (Ser).

This sequence belongs to the PAL/histidase family. Post-translationally, contains an active site 4-methylidene-imidazol-5-one (MIO), which is formed autocatalytically by cyclization and dehydration of residues Ala-Ser-Gly.

It localises to the cytoplasm. It catalyses the reaction L-histidine = trans-urocanate + NH4(+). The protein operates within amino-acid degradation; L-histidine degradation into L-glutamate; N-formimidoyl-L-glutamate from L-histidine: step 1/3. This Yersinia pestis protein is Histidine ammonia-lyase.